We begin with the raw amino-acid sequence, 335 residues long: Glucan endo-1,3-beta-glucosidase, acidic isoform (335 aa).

Residues 1–29 (MARQGVIASMHALALLLGAFAAIPTGVQS) form the signal peptide. Glu122 (proton donor) is an active-site residue. Catalysis depends on Glu259, which acts as the Nucleophile.

Belongs to the glycosyl hydrolase 17 family. Accumulates in aleurone layers. Much lower levels are found in the embryo, and none in starchy endosperm.

It is found in the secreted. Its subcellular location is the extracellular space. The catalysed reaction is Hydrolysis of (1-&gt;3)-beta-D-glucosidic linkages in (1-&gt;3)-beta-D-glucans.. Is thought to be an important plant defense-related product against fungal pathogens. The protein is Glucan endo-1,3-beta-glucosidase, acidic isoform of Zea mays (Maize).